The following is a 150-amino-acid chain: Ribosome maturation factor RimP (150 aa).

The protein belongs to the RimP family.

The protein localises to the cytoplasm. In terms of biological role, required for maturation of 30S ribosomal subunits. The sequence is that of Ribosome maturation factor RimP from Hahella chejuensis (strain KCTC 2396).